Reading from the N-terminus, the 556-residue chain is Zinc finger protein 18 (556 aa).

Residues 41-123 (RQLFRQFRYQ…TLVESLKGDP (83 aa)) enclose the SCAN box domain. The disordered stretch occupies residues 169 to 195 (QDLPLQNTSSAPGELLSHGVKEESDLE). The 74-residue stretch at 218–291 (EVGTALLPSL…HLHSAEKMAR (74 aa)) folds into the KRAB domain. 5 consecutive C2H2-type zinc fingers follow at residues 415–437 (PTCR…QRTH), 443–465 (FHCR…QRTH), 471–493 (CKCD…EKIH), 499–521 (YKCP…QRVH), and 527–549 (YKCT…QRSH).

This sequence belongs to the krueppel C2H2-type zinc-finger protein family.

It is found in the nucleus. Functionally, may be involved in transcriptional regulation. The sequence is that of Zinc finger protein 18 (Znf18) from Rattus norvegicus (Rat).